We begin with the raw amino-acid sequence, 510 residues long: Histidine ammonia-lyase (510 aa).

A cross-link (5-imidazolinone (Ala-Gly)) is located at residues 143-145 (ASG). Residue Ser144 is modified to 2,3-didehydroalanine (Ser).

The protein belongs to the PAL/histidase family. Post-translationally, contains an active site 4-methylidene-imidazol-5-one (MIO), which is formed autocatalytically by cyclization and dehydration of residues Ala-Ser-Gly.

Its subcellular location is the cytoplasm. The catalysed reaction is L-histidine = trans-urocanate + NH4(+). The protein operates within amino-acid degradation; L-histidine degradation into L-glutamate; N-formimidoyl-L-glutamate from L-histidine: step 1/3. The chain is Histidine ammonia-lyase from Aliivibrio fischeri (strain ATCC 700601 / ES114) (Vibrio fischeri).